The following is a 493-amino-acid chain: Cysteine sulfinic acid decarboxylase (493 aa).

The residue at position 305 (lysine 305) is an N6-(pyridoxal phosphate)lysine.

It belongs to the group II decarboxylase family. In terms of assembly, homodimer. Requires pyridoxal 5'-phosphate as cofactor. Expressed in brain, liver and kidney.

The catalysed reaction is L-aspartate + H(+) = beta-alanine + CO2. It carries out the reaction 3-sulfino-L-alanine + H(+) = hypotaurine + CO2. It catalyses the reaction L-cysteate + H(+) = taurine + CO2. Its pathway is organosulfur biosynthesis; taurine biosynthesis; hypotaurine from L-cysteine: step 2/2. Its function is as follows. Catalyzes the decarboxylation of L-aspartate, 3-sulfino-L-alanine (cysteine sulfinic acid), and L-cysteate to beta-alanine, hypotaurine and taurine, respectively. The preferred substrate is 3-sulfino-L-alanine. Does not exhibit any decarboxylation activity toward glutamate. The polypeptide is Cysteine sulfinic acid decarboxylase (Csad) (Rattus norvegicus (Rat)).